A 245-amino-acid chain; its full sequence is Flavin-dependent thymidylate synthase (245 aa).

Residues 6–220 (PRVELLAHTP…PELFAHAGAK (215 aa)) enclose the ThyX domain. Residues Ser65, 89–91 (RHR), and Gln97 each bind FAD. DUMP contacts are provided by residues 86–89 (QLVR), 97–101 (QQSQR), and Arg159. Positions 89–99 (RHRIASFSQQS) match the ThyX motif motif. FAD contacts are provided by residues 175-177 (NCR) and His181. DUMP is bound at residue Arg186. Residue Arg186 is the Involved in ionization of N3 of dUMP, leading to its activation of the active site.

It belongs to the thymidylate synthase ThyX family. In terms of assembly, homotetramer. It depends on FAD as a cofactor.

It carries out the reaction dUMP + (6R)-5,10-methylene-5,6,7,8-tetrahydrofolate + NADPH + H(+) = dTMP + (6S)-5,6,7,8-tetrahydrofolate + NADP(+). The protein operates within pyrimidine metabolism; dTTP biosynthesis. Functionally, catalyzes the reductive methylation of 2'-deoxyuridine-5'-monophosphate (dUMP) to 2'-deoxythymidine-5'-monophosphate (dTMP) while utilizing 5,10-methylenetetrahydrofolate (mTHF) as the methyl donor, and NADPH and FADH(2) as the reductant. This chain is Flavin-dependent thymidylate synthase, found in Nitratidesulfovibrio vulgaris (strain ATCC 29579 / DSM 644 / CCUG 34227 / NCIMB 8303 / VKM B-1760 / Hildenborough) (Desulfovibrio vulgaris).